The primary structure comprises 155 residues: Protein U1 (155 aa).

Belongs to the nanovirus U1 protein family.

The polypeptide is Protein U1 (DNA-U1) (Cicer arietinum (Chickpea)).